The primary structure comprises 159 residues: Ribosomal RNA large subunit methyltransferase H (159 aa).

Residues Leu76, Gly108, and 127 to 132 (FGLLTL) contribute to the S-adenosyl-L-methionine site.

Belongs to the RNA methyltransferase RlmH family. In terms of assembly, homodimer.

The protein localises to the cytoplasm. It carries out the reaction pseudouridine(1915) in 23S rRNA + S-adenosyl-L-methionine = N(3)-methylpseudouridine(1915) in 23S rRNA + S-adenosyl-L-homocysteine + H(+). Its function is as follows. Specifically methylates the pseudouridine at position 1915 (m3Psi1915) in 23S rRNA. This is Ribosomal RNA large subunit methyltransferase H from Streptococcus agalactiae serotype Ia (strain ATCC 27591 / A909 / CDC SS700).